Here is a 362-residue protein sequence, read N- to C-terminus: Mortality factor 4-like protein 1 (362 aa).

The Tudor-knot domain maps to 12-51 (QEGERVLCFHGPLLYEAKCVKVAIKDKQVKYFIHYSGWNK). An interaction with KAT8 region spans residues 26–62 (YEAKCVKVAIKDKQVKYFIHYSGWNKKSAVRPRRSEK). The disordered stretch occupies residues 113-182 (RELQKANQEQ…RKKRARVDPT (70 aa)). Residues 133-266 (PGKKTSGLQQ…VAGIKEYFNV (134 aa)) form a sufficient for interaction with SIN3A region. The Nuclear localization signal signature appears at 135-146 (KKTSGLQQKNVE). Lysine 143 is modified (N6-acetyllysine). The segment at 164-230 (STSETPQPPR…FYLPAKKNVD (67 aa)) is interaction with RB1-1. A sufficient for interaction with PHF12 region spans residues 188 to 342 (TFMNRVEVKV…FLKYLAKNSA (155 aa)). One can recognise an MRG domain in the interval 191–362 (NRVEVKVKIP…APPEYHRKAV (172 aa)). The segment at 323-344 (LALLLNYLHDFLKYLAKNSATL) is interaction with RB1-2.

As to quaternary structure, component of the NuA4 histone acetyltransferase complex which contains the catalytic subunit KAT5/TIP60 and the subunits EP400, TRRAP/PAF400, BRD8/SMAP, EPC1, DMAP1/DNMAP1, RUVBL1/TIP49, RUVBL2, ING3, actin, ACTL6A/BAF53A, MORF4L1/MRG15, MORF4L2/MRGX, MRGBP, YEATS4/GAS41, VPS72/YL1 and MEAF6. The NuA4 complex interacts with MYC and the adenovirus E1A protein. MORF4L1 may also participate in the formation of NuA4 related complexes which lack the KAT5/TIP60 catalytic subunit, but which include the SWI/SNF related protein SRCAP. Component of the mSin3A histone deacetylase complex, which includes SIN3A, HDAC2, ARID4B, MORF4L1, RBBP4/RbAp48, and RBBP7/RbAp46. May also interact with PHF12 and one or more as yet undefined members of the TLE (transducin-like enhancer of split) family of transcriptional repressors. Component of the SIN3B complex, which includes SIN3B, HDAC2 or HDAC1, PHF12 and MORF4L1. Interacts with RB1 and KAT8. Interacts with the N-terminus of MRFAP1. Found in a complex composed of MORF4L1, MRFAP1 and RB1. Interacts with the entire BRCA complex, which contains BRCA1, PALB2, BRCA2 and RAD51. Interacts with PALB2. Forms a complex with MSL1 and NUPR1.

It is found in the nucleus. Its function is as follows. Component of the NuA4 histone acetyltransferase (HAT) complex which is involved in transcriptional activation of select genes principally by acetylation of nucleosomal histones H4 and H2A. This modification may both alter nucleosome - DNA interactions and promote interaction of the modified histones with other proteins which positively regulate transcription. This complex may be required for the activation of transcriptional programs associated with oncogene and proto-oncogene mediated growth induction, tumor suppressor mediated growth arrest and replicative senescence, apoptosis, and DNA repair. The NuA4 complex ATPase and helicase activities seem to be, at least in part, contributed by the association of RUVBL1 and RUVBL2 with EP400. NuA4 may also play a direct role in DNA repair when directly recruited to sites of DNA damage. As part of the SIN3B complex represses transcription and counteracts the histone acetyltransferase activity of EP300 through the recognition H3K27ac marks by PHF12 and the activity of the histone deacetylase HDAC2. SIN3B complex is recruited downstream of the constitutively active genes transcriptional start sites through interaction with histones and mitigates histone acetylation and RNA polymerase II progression within transcribed regions contributing to the regulation of transcription. Required for homologous recombination repair (HRR) and resistance to mitomycin C (MMC). Involved in the localization of PALB2, BRCA2 and RAD51, but not BRCA1, to DNA-damage foci. This is Mortality factor 4-like protein 1 from Homo sapiens (Human).